The primary structure comprises 215 residues: Small ribosomal subunit protein uS7 (215 aa).

It belongs to the universal ribosomal protein uS7 family. Part of the 30S ribosomal subunit.

Its function is as follows. One of the primary rRNA binding proteins, it binds directly to 16S rRNA where it nucleates assembly of the head domain of the 30S subunit. Is located at the subunit interface close to the decoding center. The sequence is that of Small ribosomal subunit protein uS7 from Thermococcus celer.